The following is a 388-amino-acid chain: Lipid-A-disaccharide synthase (388 aa).

The protein belongs to the LpxB family.

The catalysed reaction is a lipid X + a UDP-2-N,3-O-bis[(3R)-3-hydroxyacyl]-alpha-D-glucosamine = a lipid A disaccharide + UDP + H(+). The protein operates within bacterial outer membrane biogenesis; LPS lipid A biosynthesis. Functionally, condensation of UDP-2,3-diacylglucosamine and 2,3-diacylglucosamine-1-phosphate to form lipid A disaccharide, a precursor of lipid A, a phosphorylated glycolipid that anchors the lipopolysaccharide to the outer membrane of the cell. This Sulfurihydrogenibium sp. (strain YO3AOP1) protein is Lipid-A-disaccharide synthase.